Reading from the N-terminus, the 412-residue chain is Alpha-2,8-sialyltransferase 8E (412 aa).

The Cytoplasmic portion of the chain corresponds to 1–16 (MRYADPSANRDLLGNR). A helical; Signal-anchor for type II membrane protein membrane pass occupies residues 17-37 (TLLFIFICAFALVTLLQQILY). At 38–412 (SKSYIKRGFQ…RVHTGTCNCC (375 aa)) the chain is on the lumenal side. 4 N-linked (GlcNAc...) asparagine glycosylation sites follow: N58, N64, N73, and N92. 2 cysteine pairs are disulfide-bonded: C200/C349 and C214/C409. Substrate-binding positions include N228 and 250–252 (NPS). An N-linked (GlcNAc...) asparagine glycan is attached at N277. Position 336–338 (336–338 (STG)) interacts with substrate. H384 acts as the Proton donor/acceptor in catalysis.

Belongs to the glycosyltransferase 29 family. Highly expressed in brain. Expressed at low levels in other tissues, including liver, testis, lung, placenta and spleen.

It is found in the golgi apparatus membrane. It catalyses the reaction a ganglioside GT1b (d18:1(4E)) + CMP-N-acetyl-beta-neuraminate = a ganglioside GQ1b (d18:1(4E)) + CMP + H(+). The enzyme catalyses a ganglioside GD3 (d18:1(4E)) + CMP-N-acetyl-beta-neuraminate = a ganglioside GT3 (d18:1(4E)) + CMP + H(+). The catalysed reaction is a ganglioside GD1a (d18:1(4E)) + CMP-N-acetyl-beta-neuraminate = a ganglioside GT1a (d18:1(4E)) + CMP + H(+). It carries out the reaction a ganglioside GM1b (d18:1(4E)) + CMP-N-acetyl-beta-neuraminate = a ganglioside GD1c (d18:1(4E)) + CMP + H(+). It catalyses the reaction a ganglioside GQ1c (d18:1(4E)) + CMP-N-acetyl-beta-neuraminate = a ganglioside GP1c (d18:1(4E)) + CMP + H(+). It participates in protein modification; protein glycosylation. Functionally, involved in the synthesis of gangliosides GD1c, GT1a, GQ1b, GP1c and GT3 from GD1a, GT1b, GM1b and GD3 respectively. In Mus musculus (Mouse), this protein is Alpha-2,8-sialyltransferase 8E.